A 564-amino-acid polypeptide reads, in one-letter code: Isopullulanase (564 aa).

A signal peptide spans methionine 1–alanine 19. 15 N-linked (GlcNAc...) asparagine glycosylation sites follow: asparagine 24, asparagine 94, asparagine 115, asparagine 138, asparagine 186, asparagine 210, asparagine 305, asparagine 381, asparagine 448, asparagine 455, asparagine 460, asparagine 486, asparagine 491, asparagine 503, and asparagine 535.

N-glycosylated.

It localises to the secreted. It carries out the reaction Hydrolysis of pullulan to isopanose (6-alpha-maltosylglucose).. In terms of biological role, hydrolyzes pullulan, a linear polymer which is composed of maltotriose units with alpha-1,6 glucosidic linkages, to produce isopanose (Glca1-4Glca1-6Glc). The chain is Isopullulanase (ipuA) from Aspergillus niger.